The following is a 60-amino-acid chain: Toxin C10S2C2 (60 aa).

4 disulfides stabilise this stretch: cysteine 3–cysteine 22, cysteine 17–cysteine 39, cysteine 41–cysteine 52, and cysteine 53–cysteine 58. The important for binding to L-type calcium channels stretch occupies residues 41 to 48 (CPTAMWPY).

Belongs to the three-finger toxin family. Short-chain subfamily. L-type calcium blocker sub-subfamily. In terms of tissue distribution, expressed by the venom gland.

It is found in the secreted. This specific blocker of the L-type calcium channel (Cav1/CACNA1) is a smooth muscle relaxant and an inhibitor of cardiac contractions. The sequence is that of Toxin C10S2C2 from Dendroaspis angusticeps (Eastern green mamba).